Here is a 434-residue protein sequence, read N- to C-terminus: ATP-dependent protease ATPase subunit HslU (434 aa).

ATP is bound by residues isoleucine 18, 60–65, aspartate 247, glutamate 312, and arginine 384; that span reads GVGKTE.

This sequence belongs to the ClpX chaperone family. HslU subfamily. As to quaternary structure, a double ring-shaped homohexamer of HslV is capped on each side by a ring-shaped HslU homohexamer. The assembly of the HslU/HslV complex is dependent on binding of ATP.

The protein localises to the cytoplasm. Its function is as follows. ATPase subunit of a proteasome-like degradation complex; this subunit has chaperone activity. The binding of ATP and its subsequent hydrolysis by HslU are essential for unfolding of protein substrates subsequently hydrolyzed by HslV. HslU recognizes the N-terminal part of its protein substrates and unfolds these before they are guided to HslV for hydrolysis. The chain is ATP-dependent protease ATPase subunit HslU from Brucella suis (strain ATCC 23445 / NCTC 10510).